The chain runs to 410 residues: Tryptophan synthase beta chain (410 aa).

At lysine 98 the chain carries N6-(pyridoxal phosphate)lysine.

This sequence belongs to the TrpB family. As to quaternary structure, tetramer of two alpha and two beta chains. It depends on pyridoxal 5'-phosphate as a cofactor.

The enzyme catalyses (1S,2R)-1-C-(indol-3-yl)glycerol 3-phosphate + L-serine = D-glyceraldehyde 3-phosphate + L-tryptophan + H2O. The protein operates within amino-acid biosynthesis; L-tryptophan biosynthesis; L-tryptophan from chorismate: step 5/5. The beta subunit is responsible for the synthesis of L-tryptophan from indole and L-serine. In Dinoroseobacter shibae (strain DSM 16493 / NCIMB 14021 / DFL 12), this protein is Tryptophan synthase beta chain.